A 743-amino-acid chain; its full sequence is Tudor domain-containing protein 3 (743 aa).

Positions 241–262 (KTFGGGGGGARSNLNIGAAGHR) are disordered. The region spanning 286 to 326 (LVDEKALKHITEMGFSKEASRQALMDNANNLEAALNVLLNS) is the UBA domain. Disordered stretches follow at residues 327 to 365 (SKQK…APST) and 380 to 549 (EEPK…CYER). A Phosphoserine modification is found at S349. The segment covering 414–431 (PRNDTRQPRNERPPRFQK) has biased composition (basic and acidic residues). Polar residues predominate over residues 432–445 (DTPTSKSTVENSVL). Residue S438 is modified to Phosphoserine. 2 stretches are compositionally biased toward basic and acidic residues: residues 464 to 484 (AEER…KDAS) and 536 to 549 (RENQ…CYER). K563 is covalently cross-linked (Glycyl lysine isopeptide (Lys-Gly) (interchain with G-Cter in SUMO2)). A disordered region spans residues 572–603 (TDYPRPVQSNSLGVPNGETAPPLKGRRVGPIK). The Tudor domain maps to 647-707 (VWKPGDECFA…KPVQTEAWEE (61 aa)). Positions 711 to 725 (YDHTIEFRRGGDGQP) are enriched in basic and acidic residues. Positions 711–743 (YDHTIEFRRGGDGQPRRSTRPTQQFYQPPRARN) are disordered. Residues 723-743 (GQPRRSTRPTQQFYQPPRARN) are EBM motif; may mediate interaction with the EJC.

In terms of assembly, component of mRNA stress granules. Interacts with FMR1, FXR1, FXR2, EWSR1, FUS, SERBP1, EEF1A1 and DDX3X or DDX3Y, and with the small nuclear ribonucleoprotein-associated proteins SNRPB and SNRPN. Interacts with 'Lys-48'-linked tetra-ubiquitin, but not with monoubiquitin or 'Lys-63'-linked ubiquitin chains. May interact with the exon junction complex (EJC) composed at least of CASC3, EIF4A3, MAGOH and RBM8A. Interacts with POLR2A (via the C-terminal domain (CTD)).

Its subcellular location is the cytoplasm. It localises to the nucleus. Its function is as follows. Scaffolding protein that specifically recognizes and binds dimethylarginine-containing proteins. Plays a role in the regulation of translation of target mRNAs by binding Arg/Gly-rich motifs (GAR) in dimethylarginine-containing proteins. In nucleus, acts as a coactivator: recognizes and binds asymmetric dimethylation on the core histone tails associated with transcriptional activation (H3R17me2a and H4R3me2a) and recruits proteins at these arginine-methylated loci. In cytoplasm, acts as an antiviral factor that participates in the assembly of stress granules together with G3BP1. This is Tudor domain-containing protein 3 (Tdrd3) from Mus musculus (Mouse).